Reading from the N-terminus, the 393-residue chain is Cytotoxic and regulatory T-cell molecule (393 aa).

The N-terminal stretch at 1-16 is a signal peptide; it reads MWWGALSLLFWVPVQA. The region spanning 17-111 is the Ig-like V-type domain; it reads AFLKMETVTV…SVKTKQVRVT (95 aa). Residues 17–289 are Extracellular-facing; it reads AFLKMETVTV…HTGLARRKSG (273 aa). 2 disulfides stabilise this stretch: cysteine 36-cysteine 96 and cysteine 139-cysteine 194. 2 N-linked (GlcNAc...) asparagine glycosylation sites follow: asparagine 85 and asparagine 176. The 90-residue stretch at 119 to 208 folds into the Ig-like C2-type domain; sequence PTVEALVLRR…EGLHGRKLVA (90 aa). A compositionally biased stretch (acidic residues) spans 218–228; sequence DQETSDQETSD. Residues 218–280 are disordered; that stretch reads DQETSDQETS…GLSTEASAQH (63 aa). Residues 229 to 246 are compositionally biased toward low complexity; sequence APEQSSLSSQALQQPTST. Residues 247–256 show a composition bias toward polar residues; sequence VSMMENSSIP. Over residues 257–267 the composition is skewed to basic and acidic residues; the sequence is ETDKEEKEHAT. A compositionally biased stretch (polar residues) spans 270–280; it reads PGLSTEASAQH. Residues 290–310 traverse the membrane as a helical segment; sequence ILLLTLVSFLIFILFIIVQLF. Topologically, residues 311 to 393 are cytoplasmic; sequence IMKLRKAHVV…KHSRVPESIV (83 aa). The disordered stretch occupies residues 333–356; the sequence is ESYRSRSNNEETSSQENSSQAPQS. The span at 342–352 shows a compositional bias: low complexity; it reads EETSSQENSSQ. The short motif at 390–393 is the PDZ-binding element; the sequence is ESIV.

The protein belongs to the nectin family. As to quaternary structure, monomer. May form homodimer (via Ig-like V-type domain). Interacts (via Ig-like V-type domain) with CADM1 (via Ig-like V-type domain); the interaction competes with CRTAM homodimerization and CADM1 homodimerization. Interacts (via PDZ-binding motif) with SCRIB (via PDZ domain 3); the interaction promotes CRTAM and SCRIB polarization in a subset of CD4+ T-cells. As to expression, in the immune system, expression is restricted to activated class-I MHC-restricted cells, including NKT, NK and CD8+ T-cells (at protein level). Transiently expressed in activated CD8+ T-cells and a subset of activated CD4+ T-cells (at protein level). Expressed in activated intestinal T-cells, specifically intraepithelial CD4+ CD8+ T-cells, intraepithelial CD4+ T-cells and, CD8+ T-cells in the intestine epithelium, lamina propria, Peyer's Patches and mesenteric lymph nodes. Also expressed in spleen, brain and testis.

Its subcellular location is the cell membrane. Its function is as follows. Mediates heterophilic cell-cell adhesion which regulates the activation, differentiation and tissue retention of various T-cell subsets. Interaction with CADM1 promotes natural killer (NK) cell cytotoxicity and IFNG/interferon-gamma secretion by CD8+ T-cells in vitro as well as NK cell-mediated rejection of tumors expressing CADM1 in vivo. Regulates CD8+ T-cell proliferation in response to T-cell receptor (TCR) activation. Appears to be dispensable for CD8+ T-cell-mediated cytotoxicity. Interaction with SCRIB promotes the late phase of cellular polarization of a subset of CD4+ T-cells, which in turn regulates TCR-mediated proliferation and IFNG, IL17 and IL22 production. By interacting with CADM1 on CD8+ dendritic cells, regulates the retention of activated CD8+ T-cells within the draining lymph node. Required for the intestinal retention of intraepithelial CD4+ CD8+ T-cells and, to a lesser extent, intraepithelial and lamina propria CD8+ T-cells and CD4+ T-cells. Interaction with CADM1 promotes the adhesion to gut-associated CD103+ dendritic cells, which may facilitate the expression of gut-homing and adhesion molecules on T-cells and the conversion of CD4+ T-cells into CD4+ CD8+ T-cells. This Mus musculus (Mouse) protein is Cytotoxic and regulatory T-cell molecule.